The sequence spans 37 residues: Cytochrome b6-f complex subunit 5 (37 aa).

Residues Leu-5 to Ala-25 form a helical membrane-spanning segment.

The protein belongs to the PetG family. In terms of assembly, the 4 large subunits of the cytochrome b6-f complex are cytochrome b6, subunit IV (17 kDa polypeptide, PetD), cytochrome f and the Rieske protein, while the 4 small subunits are PetG, PetL, PetM and PetN. The complex functions as a dimer.

It is found in the plastid. The protein resides in the chloroplast thylakoid membrane. In terms of biological role, component of the cytochrome b6-f complex, which mediates electron transfer between photosystem II (PSII) and photosystem I (PSI), cyclic electron flow around PSI, and state transitions. PetG is required for either the stability or assembly of the cytochrome b6-f complex. The polypeptide is Cytochrome b6-f complex subunit 5 (Chlorella vulgaris (Green alga)).